The following is a 345-amino-acid chain: Krueppel-like factor 3 (345 aa).

The segment at 1-74 (MLMFDPVPVK…TVNKRSSPPS (74 aa)) is repressor domain. K10 is covalently cross-linked (Glycyl lysine isopeptide (Lys-Gly) (interchain with G-Cter in SUMO)). Residues 60-68 (EPVDLTVNK) carry the 9aaTAD; inactive motif. The CTBP-binding motif motif lies at 61-65 (PVDLT). The tract at residues 66–112 (VNKRSSPPSAGNSPSSLKFPSSHRRASPGLSMPSSSPPIKKYSPPSP) is disordered. A Glycyl lysine isopeptide (Lys-Gly) (interchain with G-Cter in SUMO2) cross-link involves residue K68. Low complexity-rich tracts occupy residues 70–81 (SSPPSAGNSPSS) and 92–108 (SPGLSMPSSSPPIKKYS). S71, S92, S101, S108, and S111 each carry phosphoserine. Glycyl lysine isopeptide (Lys-Gly) (interchain with G-Cter in SUMO2) cross-links involve residues K196 and K198. 3 positions are modified to phosphoserine: S216, S224, and S250. C2H2-type zinc fingers lie at residues 260–284 (HRCDYDGCNKVYTKSSHLKAHRRTH), 290–314 (YKCTWEGCTWKFARSDELTRHFRKH), and 320–342 (FQCPDCDRSFSRSDHLALHRKRH).

It belongs to the krueppel C2H2-type zinc-finger protein family. Monomer. Post-translationally, sumoylated with SUMO1. Sumoylation is enhanced by PIAS1, PIAS2alpha and PIAS2beta, and PIAS4, but not by Pc2. Enhances transcriptional repression, but has no effect on DNA binding. Sumoylation on Lys-198 is the major site.

The protein resides in the nucleus. Functionally, binds to the CACCC box of erythroid cell-expressed genes. May play a role in hematopoiesis. In Homo sapiens (Human), this protein is Krueppel-like factor 3 (KLF3).